The sequence spans 187 residues: Elongation factor P (187 aa).

It belongs to the elongation factor P family.

The protein resides in the cytoplasm. It participates in protein biosynthesis; polypeptide chain elongation. Involved in peptide bond synthesis. Stimulates efficient translation and peptide-bond synthesis on native or reconstituted 70S ribosomes in vitro. Probably functions indirectly by altering the affinity of the ribosome for aminoacyl-tRNA, thus increasing their reactivity as acceptors for peptidyl transferase. The sequence is that of Elongation factor P from Synechococcus sp. (strain CC9605).